A 346-amino-acid chain; its full sequence is Uroporphyrinogen decarboxylase (346 aa).

Residues 26-30, D76, Y153, S208, and H323 each bind substrate; that span reads RQAGR.

This sequence belongs to the uroporphyrinogen decarboxylase family. Homodimer.

Its subcellular location is the cytoplasm. The enzyme catalyses uroporphyrinogen III + 4 H(+) = coproporphyrinogen III + 4 CO2. The protein operates within porphyrin-containing compound metabolism; protoporphyrin-IX biosynthesis; coproporphyrinogen-III from 5-aminolevulinate: step 4/4. Its function is as follows. Catalyzes the decarboxylation of four acetate groups of uroporphyrinogen-III to yield coproporphyrinogen-III. The chain is Uroporphyrinogen decarboxylase from Prochlorococcus marinus (strain MIT 9215).